The following is a 277-amino-acid chain: Tryptophan synthase alpha chain (277 aa).

Residues glutamate 59 and aspartate 70 each act as proton acceptor in the active site.

The protein belongs to the TrpA family. As to quaternary structure, tetramer of two alpha and two beta chains.

It catalyses the reaction (1S,2R)-1-C-(indol-3-yl)glycerol 3-phosphate + L-serine = D-glyceraldehyde 3-phosphate + L-tryptophan + H2O. Its pathway is amino-acid biosynthesis; L-tryptophan biosynthesis; L-tryptophan from chorismate: step 5/5. Functionally, the alpha subunit is responsible for the aldol cleavage of indoleglycerol phosphate to indole and glyceraldehyde 3-phosphate. In Streptomyces avermitilis (strain ATCC 31267 / DSM 46492 / JCM 5070 / NBRC 14893 / NCIMB 12804 / NRRL 8165 / MA-4680), this protein is Tryptophan synthase alpha chain.